A 467-amino-acid polypeptide reads, in one-letter code: Chromosomal replication initiator protein DnaA (467 aa).

The interval 1 to 74 (MSADVWSQGC…ESVLSDLAGK (74 aa)) is domain I, interacts with DnaA modulators. A domain II region spans residues 74 to 130 (KPVRLDLQLAAREAPPRPSSDAPRSNGHPQAAGQWLGAPSSSNAGAYTQASAPTPTH). The interval 85–127 (REAPPRPSSDAPRSNGHPQAAGQWLGAPSSSNAGAYTQASAPT) is disordered. The segment covering 112 to 127 (PSSSNAGAYTQASAPT) has biased composition (polar residues). Positions 131–347 (RLNTALTFDT…GALRKVLAYA (217 aa)) are domain III, AAA+ region. ATP-binding residues include Gly175, Gly177, Lys178, and Thr179. A domain IV, binds dsDNA region spans residues 348-467 (RFSQKDINIA…LHVLEQTLKG (120 aa)).

This sequence belongs to the DnaA family. In terms of assembly, oligomerizes as a right-handed, spiral filament on DNA at oriC.

It localises to the cytoplasm. Functionally, plays an essential role in the initiation and regulation of chromosomal replication. ATP-DnaA binds to the origin of replication (oriC) to initiate formation of the DNA replication initiation complex once per cell cycle. Binds the DnaA box (a 9 base pair repeat at the origin) and separates the double-stranded (ds)DNA. Forms a right-handed helical filament on oriC DNA; dsDNA binds to the exterior of the filament while single-stranded (ss)DNA is stabiized in the filament's interior. The ATP-DnaA-oriC complex binds and stabilizes one strand of the AT-rich DNA unwinding element (DUE), permitting loading of DNA polymerase. After initiation quickly degrades to an ADP-DnaA complex that is not apt for DNA replication. Binds acidic phospholipids. The protein is Chromosomal replication initiator protein DnaA of Methylibium petroleiphilum (strain ATCC BAA-1232 / LMG 22953 / PM1).